The following is a 412-amino-acid chain: MPLFFSLVLLILGLHCAPPNSCEGKITSCLSPQQNATLYKMSSINADFAFNLYRKVTVETPDQNIFFSPVSISAGLAMLSLGACSSTQTQILESLGFNLTDTPMAEIQQGFQHLICSLNFPKKELELQMGNALFIGKQLKPLEKFLDDVKNLYETEVFSTDFSNVSAAQQEINSHVERQTKGKIVGLIQDLKPNTITVLVNYLCFKAQWANPFDPSKTEEGSSFLVDKTTTVQVPMMHQVDQYYHLVDTELNCTVLQMDYSKNALALFVLPKEGQMEGVEGAMSSKILKKWNRLLQKGWVNLFVPKFSISATYDLGGILLKMGIQDAFADNADFSGLTKDNGLKVSNVAHKAMFYIGEKGTEAIPEVRFLNQPETTLLHPIIQFDRSFLLLILEKNTRSILFLGKVVDPTEV.

An N-terminal signal peptide occupies residues 1 to 16 (MPLFFSLVLLILGLHC). Residues N35, N98, N164, and N252 are each glycosylated (N-linked (GlcNAc...) asparagine). The thyroxine site is built by N292 and K395.

It belongs to the serpin family. Expressed by the liver and secreted in plasma.

Its subcellular location is the secreted. Its function is as follows. Major thyroid hormone transport protein in serum. This is Thyroxine-binding globulin (SERPINA7) from Ovis aries (Sheep).